The chain runs to 296 residues: Nucleotide-binding protein SAG0531 (296 aa).

Position 13 to 20 (13 to 20 (GMSGAGKT)) interacts with ATP. Residue 63 to 66 (DMRS) participates in GTP binding.

It belongs to the RapZ-like family.

In terms of biological role, displays ATPase and GTPase activities. This is Nucleotide-binding protein SAG0531 from Streptococcus agalactiae serotype V (strain ATCC BAA-611 / 2603 V/R).